The following is a 66-amino-acid chain: Sarcoplasmic/endoplasmic reticulum calcium ATPase regulator ARLN (66 aa).

Position 1 is an N-acetylmethionine (M1). The tract at residues 1 to 37 (MEVDAPGVDGRDGLRERRGFSEGGRQNFDVRPQSGAN) is disordered. Basic and acidic residues predominate over residues 9-20 (DGRDGLRERRGF). Residues 45–65 (WLDLWLFILFDVVVFLFVYFL) form a helical membrane-spanning segment.

In terms of assembly, homooligomer. Can also form heterooligomers with other sarcoplasmic/endoplasmic reticulum calcium ATPase (SERCA) regulators ERLN, PLN, SLN and STRIT1/DWORF. Monomer. Interacts as a monomer with ATP2A2/SERCA2; the interaction results in inhibition of ATP2A2 Ca(2+) affinity.

It localises to the endoplasmic reticulum membrane. Functionally, inhibits the activity of the calcium ATPases ATP2A2/SERCA2 and ATP2A3/SERCA3 by decreasing their apparent affinity for Ca(2+). The polypeptide is Sarcoplasmic/endoplasmic reticulum calcium ATPase regulator ARLN (Homo sapiens (Human)).